The primary structure comprises 204 residues: Putative 3-methyladenine DNA glycosylase (204 aa).

This sequence belongs to the DNA glycosylase MPG family.

In Bacillus cytotoxicus (strain DSM 22905 / CIP 110041 / 391-98 / NVH 391-98), this protein is Putative 3-methyladenine DNA glycosylase.